The primary structure comprises 460 residues: MAKEYKTITQIAGPLIFVEKTEPVGYNEIVNIKMGDGTVRRGQVLDSSADIVVVQVFEGTGGLDKDCGVIFTGETLKLPASVDLLGRILSGSGEPRDGGPRIVPDQLLDINGAAMNPYARLPPKDFIQTGISTIDGTNTLVRGQKLPIFSASGLPHNEIALQIARQASVPGSESAFAVVFAAMGITNEEAQYFMSDFEKTGALERAVVFLNLADDPAVERIVTPRMALTAAEYLAYEHGMHVLVILTDITNYAEALRQMGAARNEVPGRRGYPGYMYTDLATLYERAGIVKGAKGSVTQIPILSMPGDDITHPIPDLSGYITEGQIVVARELHRKGIYPPINVLPSLSRLMNSGIGAGKTREDHKAVSDQMYAGYAEGRDLRGLVAIVGKEALSERDTKFLEFADLFEDKFVRQGRNENRTIEDTLEIGWQILTHLPENQLGRIDNKYIQKYHPAHRKAK.

Belongs to the ATPase alpha/beta chains family. In terms of assembly, has multiple subunits, A(3), B(3), C, D, E, F, G, I and K(x); there may be a few other subunits as well.

Its subcellular location is the cell membrane. In terms of biological role, component of the A-type ATP synthase that produces ATP from ADP in the presence of a proton gradient across the membrane. The B chain is a regulatory subunit. The chain is A-type ATP synthase subunit B from Methanosarcina mazei (strain ATCC BAA-159 / DSM 3647 / Goe1 / Go1 / JCM 11833 / OCM 88) (Methanosarcina frisia).